The chain runs to 297 residues: Small ribosomal subunit biogenesis GTPase RsgA (297 aa).

One can recognise a CP-type G domain in the interval 65 to 223; sequence TNEIGRPAVA…IADTPGFSAI (159 aa). GTP is bound by residues 114 to 117 and 166 to 174; these read SKAD and GQSGAGKST. 4 residues coordinate Zn(2+): C247, C252, H254, and C260.

The protein belongs to the TRAFAC class YlqF/YawG GTPase family. RsgA subfamily. Monomer. Associates with 30S ribosomal subunit, binds 16S rRNA. The cofactor is Zn(2+).

Its subcellular location is the cytoplasm. One of several proteins that assist in the late maturation steps of the functional core of the 30S ribosomal subunit. Helps release RbfA from mature subunits. May play a role in the assembly of ribosomal proteins into the subunit. Circularly permuted GTPase that catalyzes slow GTP hydrolysis, GTPase activity is stimulated by the 30S ribosomal subunit. In Lactobacillus gasseri (strain ATCC 33323 / DSM 20243 / BCRC 14619 / CIP 102991 / JCM 1131 / KCTC 3163 / NCIMB 11718 / NCTC 13722 / AM63), this protein is Small ribosomal subunit biogenesis GTPase RsgA.